We begin with the raw amino-acid sequence, 784 residues long: Toll-like receptor 2 (784 aa).

Residues 1–24 (MLHVLWTFWILVAMTDLSRKGCSA) form the signal peptide. Topologically, residues 25 to 588 (QASLSCDAAG…RPSVLECHQT (564 aa)) are extracellular. Cysteines 30 and 36 form a disulfide. 19 LRR repeats span residues 54–77 (MKSL…GCVN), 78–101 (LRAL…SLSK), 102–125 (LEYL…PLSS), 126–150 (LKYL…NLTH), 151–175 (LQTL…GLTS), 176–199 (LDEL…SIQS), 200–223 (IHHL…TLSS), 224–250 (VGYL…MNSP), 251–278 (MKKL…YTPE), 279–308 (LLEV…ELGK), 309–337 (VETL…LLEK), 338–361 (VKRI…HLKS), 362–388 (LEFL…SWPS), 389–414 (LQTL…TLKN), 415–437 (LTAL…WPGK), 438–457 (MRFL…CIPQ), 458–478 (TLEV…FLPL), 479–500 (LREL…LFPV), and 501–524 (LLVM…SFPK). N-linked (GlcNAc...) asparagine glycosylation is found at N114 and N147. A disulfide bridge connects residues C353 and C382. Residue N414 is glycosylated (N-linked (GlcNAc...) asparagine). Residues C432 and C454 are joined by a disulfide bond. An N-linked (GlcNAc...) asparagine glycan is attached at N442. In terms of domain architecture, LRRCT spans 525–579 (LVSLEAGGNHFICSCELLSFTLEHPALVQVLAGWPDSYLCDSPSRLRGQRVQDAR). Residues 589 to 609 (LLVSGVCCALVLLILLIGGLC) form a helical membrane-spanning segment. Residues 610 to 784 (HHFHGLWYLR…WVNLRTAIKS (175 aa)) lie on the Cytoplasmic side of the membrane. In terms of domain architecture, TIR spans 639 to 782 (ICYDAFVSYS…VFWVNLRTAI (144 aa)). K754 participates in a covalent cross-link: Glycyl lysine isopeptide (Lys-Gly) (interchain with G-Cter in ubiquitin). The short motif at 761–778 (YLEWPLDEGQQEVFWVNL) is the ATG16L1-binding motif element.

It belongs to the Toll-like receptor family. In terms of assembly, interacts with LY96, TLR1 and TLR6 (via extracellular domain). TLR2 seems to exist in heterodimers with either TLR1 or TLR6 before stimulation by the ligand. The heterodimers form bigger oligomers in response to their corresponding ligands as well as further heterotypic associations with other receptors such as CD14 and/or CD36. Binds MYD88 (via TIR domain). Interacts with TICAM1. Interacts with CNPY3. Interacts with ATG16L1. Interacts with PPP1R11. Interacts with TICAM2. Interacts with TIRAP. Ubiquitinated at Lys-754 by PPP1R11, leading to its degradation. Deubiquitinated by USP2. In terms of processing, glycosylation of Asn-442 is critical for secretion of the N-terminal ectodomain of TLR2.

It is found in the membrane. Its subcellular location is the cytoplasmic vesicle. The protein resides in the phagosome membrane. The protein localises to the membrane raft. Functionally, cooperates with LY96 to mediate the innate immune response to bacterial lipoproteins and other microbial cell wall components. Cooperates with TLR1 or TLR6 to mediate the innate immune response to bacterial lipoproteins or lipopeptides. Acts via MYD88 and TRAF6, leading to NF-kappa-B activation, cytokine secretion and the inflammatory response. May also promote apoptosis in response to lipoproteins. Forms activation clusters composed of several receptors depending on the ligand, these clusters trigger signaling from the cell surface and subsequently are targeted to the Golgi in a lipid-raft dependent pathway. Forms the cluster TLR2:TLR6:CD14:CD36 in response to diacylated lipopeptides and TLR2:TLR1:CD14 in response to triacylated lipopeptides. In Cricetulus griseus (Chinese hamster), this protein is Toll-like receptor 2 (TLR2).